The sequence spans 467 residues: MYQRMLRCGAELGSPGGGGGGAGGRLALLWIVPLTLSGLLGVAWGASSLGAHHIHHFHGSSKHHSVPIAIYRSPASLRGGHAGTTYIFSKGGGQITYKWPPNDRPSTRADRLAIGFSTVQKEAVLVRVDSSSGLGDYLELHIHQGKIGVKFNVGTDDIAIEESNAIINDGKYHVVRFTRSGGNATLQVDSWPVIERYPAGNNDNERLAIARQRIPYRLGRVVDEWLLDKGRQLTIFNSQATIIIGGKEQGQPFQGQLSGLYYNGLKVLNMAAENDANIAIVGNVRLVGEVPSSMTTESTATAMQSEMSTSIMETTTTLATSTARRGNSPTKEPVSQTTDDILVASAECPSDDEDIDPCEPSSGGLANPTRAGGREPYPGSAEVIRESSSTTGMVVGIVAAAALCILILLYAMYKYRNRDEGSYHVDESRNYISNSAQSNGAVVKEKQPSSAKSANKNKKNKDKEYYV.

An N-terminal signal peptide occupies residues 1 to 45; it reads MYQRMLRCGAELGSPGGGGGGAGGRLALLWIVPLTLSGLLGVAWG. Residues 46–391 lie on the Extracellular side of the membrane; the sequence is ASSLGAHHIH…EVIRESSSTT (346 aa). Residues 86–284 enclose the Laminin G-like domain; sequence YIFSKGGGQI…DANIAIVGNV (199 aa). Ca(2+) is bound by residues aspartate 136 and valine 153. Asparagine 183 carries an N-linked (GlcNAc...) asparagine glycan. The segment at 200–229 is essential for interaction with CBLN1; modulates interaction affinity with NLGN1, NLGN2 and NLGN3; prevents interaction with DAG1/alpha-dystroglycan; modulates interaction with alpha-latrotoxin; the sequence is GNNDNERLAIARQRIPYRLGRVVDEWLLDK. Positions 235 and 237 each coordinate Ca(2+). The segment at 318–380 is disordered; that stretch reads LATSTARRGN…AGGREPYPGS (63 aa). The segment covering 324 to 339 has biased composition (polar residues); that stretch reads RRGNSPTKEPVSQTTD. The O-linked (Xyl...) (heparan sulfate) serine glycan is linked to serine 345. Residues 392 to 412 traverse the membrane as a helical segment; it reads GMVVGIVAAAALCILILLYAM. Over 413–467 the chain is Cytoplasmic; sequence YKYRNRDEGSYHVDESRNYISNSAQSNGAVVKEKQPSSAKSANKNKKNKDKEYYV. The disordered stretch occupies residues 434 to 467; it reads NSAQSNGAVVKEKQPSSAKSANKNKKNKDKEYYV. Phosphoserine occurs at positions 449, 450, and 453.

The protein belongs to the neurexin family. In terms of assembly, the cytoplasmic C-terminal region binds to CASK. Binds NLGN1, NLGN2 and NLGN3, DAG1 (alpha-dystroglycan) and alpha-latrotoxin. Binding to neuroligins is calcium-dependent, and the binding preference ranks as follow: NLGN1 &gt; NLGN4 &gt;&gt; NLGN3 &gt; NLGN2. Interacts with CBLN2 and more weakly with CBLN4. Interacts with CBLN1; interaction is CBLN1 hexamer form-dependent; CBLN1-binding is calcium-independent; isoform 1b does not interact with CBLN1. Interacts with CLSTN3. O-glycosylated; contains heparan sulfate. Heparan sulfate attachment is required for synapse development by mediating interactions with neuroligins.

Its subcellular location is the presynaptic cell membrane. Neuronal cell surface protein involved in cell recognition and cell adhesion by forming intracellular junctions through binding to neuroligins. Plays a role in formation of synaptic junctions. Functions as part of a trans-synaptic complex by binding to cerebellins and postsynaptic GRID1. This interaction helps regulate the activity of NMDA and AMPA receptors at hippocampal synapses without affecting synapse formation. NRXN1B-CBLN2-GRID1 complex transduce presynaptic signals into postsynaptic NMDAR response. This is Neurexin-1-beta from Bos taurus (Bovine).